The chain runs to 248 residues: Ankyrin repeat domain-containing protein 45 (248 aa).

2 stretches are compositionally biased toward acidic residues: residues 1-10 (MEPEETLESE) and 22-33 (EYEESQEAEETG). Positions 1 to 42 (MEPEETLESESSEKSLFSSQQEYEESQEAEETGAENPLLQPT) are disordered. ANK repeat units follow at residues 75-104 (VGRNLLYAACMAGKSDVIKALAKYGVNLNE) and 108-137 (RGYTLLHCAAAWGRLETLKALVELDVDIEA).

Its subcellular location is the cytoplasm. It is found in the midbody. It localises to the midbody ring. The protein resides in the cleavage furrow. Its function is as follows. May play a role during cell division. In Mus musculus (Mouse), this protein is Ankyrin repeat domain-containing protein 45 (Ankrd45).